Consider the following 218-residue polypeptide: Peptidase E (218 aa).

Active-site charge relay system residues include Ser123, Asp138, and His160.

The protein belongs to the peptidase S51 family.

It is found in the cytoplasm. It catalyses the reaction Dipeptidase E catalyzes the hydrolysis of dipeptides Asp-|-Xaa. It does not act on peptides with N-terminal Glu, Asn or Gln, nor does it cleave isoaspartyl peptides.. Hydrolyzes dipeptides containing N-terminal aspartate residues. May play a role in allowing the cell to use peptide aspartate to spare carbon otherwise required for the synthesis of the aspartate family of amino acids. This is Peptidase E from Haemophilus influenzae (strain ATCC 51907 / DSM 11121 / KW20 / Rd).